The chain runs to 159 residues: ATP-dependent Clp protease adapter protein CLPS1, chloroplastic (159 aa).

A chloroplast-targeting transit peptide spans 1–44 (METAICGRLALAPSSLFNSKSGDKHLVSKGPCVNRSILMTLSTS).

This sequence belongs to the ClpS family. Interacts with CLPC1 (via N-terminus) and CLPC2, but not with CLPt1 or CLPT2. Binds to ClpF; this interaction stimulates their association with ClpC. Expressed exclusively in photosynthetic green tissues with high levels in young, developing leaf tissues.

The protein localises to the plastid. It localises to the chloroplast stroma. Small adapter protein that modulate the activity of CLPC. Involved in plastid biogenesis in particular when chloroplast protein synthesis capacity is a limiting factor. Probably involved in substrate selection for plastid Clp protease system. Recruitment to ClpC chaperones is facilitated by CLPF thus forming a binary adapter for selective substrate recognition and delivery to plastid Clp protease system (CLPC). In Arabidopsis thaliana (Mouse-ear cress), this protein is ATP-dependent Clp protease adapter protein CLPS1, chloroplastic.